Consider the following 683-residue polypeptide: Amino acid transporter heavy chain SLC3A1 (683 aa).

The segment covering 1-10 (MNEDKDKRDS) has biased composition (basic and acidic residues). Residues 1–50 (MNEDKDKRDSIQMSMKGCRTNNGFVQNEDIQEQDPDSRDTPQSNAVSIPA) form a disordered region. Residues 1 to 86 (MNEDKDKRDS…ARYRVPREIL (86 aa)) are Cytoplasmic-facing. Position 10 is a phosphoserine (S10). The helical; Signal-anchor for type II membrane protein transmembrane segment at 87–107 (FWLTVVSVFLLIGATIAIIII) threads the bilayer. The Extracellular segment spans residues 108–683 (SPKCLDWWQA…SVLDLLYSSC (576 aa)). Position 211 (N211) interacts with Ca(2+). N211, N238, and N258 each carry an N-linked (GlcNAc...) asparagine glycan. C239 and C270 are joined by a disulfide. Ca(2+)-binding residues include D281, F315, L316, and E318. N329 is a glycosylation site (N-linked (GlcNAc...) asparagine). S383 carries the phosphoserine modification. 3 N-linked (GlcNAc...) asparagine glycosylation sites follow: N510, N520, and N574. 2 disulfides stabilise this stretch: C568–C664 and C671–C683.

Disulfide-linked heterodimer composed of the catalytic light subunit SLC7A9 and the heavy subunit SLC3A1. The heterodimer is the minimal functional unit. Assembles in non-covalently linked heterotetramers (dimers of heterodimers) and higher order oligomers; the oligomerization is mediated by SLC3A1 likely to prevent degradation in the endoplasmic reticulum and facilitate heteromer trafficking to the plasma membrane. Disulfide-linked heterodimer composed of the catalytic light subunit SLC7A13 and the heavy subunit SLC3A1. As to expression, predominantly expressed in kidney and intestine. In kidney localized to the apical membrane of the proximal tubules.

The protein resides in the cell membrane. Its subcellular location is the apical cell membrane. Its function is as follows. Acts as a chaperone that facilitates biogenesis and trafficking of functional transporter heteromers to the plasma membrane. Associates with SLC7A9 to form a functional transporter complex that mediates the electrogenic exchange between cationic amino acids and neutral amino acids, with a stoichiometry of 1:1. SLC7A9-SLC3A1 transporter has system b(0,+)-like activity with high affinity for extracellular cationic amino acids and L-cystine and lower affinity for intracellular neutral amino acids. Substrate exchange is driven by high concentration of intracellular neutral amino acids and the intracellular reduction of L-cystine to L-cysteine. SLC7A9-SLC3A1 acts as a major transporter for reabsorption of L-cystine and dibasic amino acids across the brush border membrane in early proximal tubules. Associates with SLC7A13 to form a functional complex that transports anionic and neutral amino acids via exchange or facilitated diffusion. SLC7A13-SLC3A1 may act as a major transporter for L-cystine in late proximal tubules, ensuring its reabsorption from the luminal fluid in exchange for cytosolic L-glutamate or L-aspartate. This is Amino acid transporter heavy chain SLC3A1 (Slc3a1) from Rattus norvegicus (Rat).